A 287-amino-acid chain; its full sequence is PIH1 domain-containing protein 1 (287 aa).

It belongs to the PIH1 family.

It is found in the nucleus. Involved in the assembly of C/D box small nucleolar ribonucleoprotein (snoRNP) particles. Recruits the SWI/SNF complex to the core promoter of rRNA genes and enhances pre-rRNA transcription. Mediates interaction of TELO2 with the R2TP complex which is necessary for the stability of MTOR and SMG1. Positively regulates the assembly and activity of the mTORC1 complex. The chain is PIH1 domain-containing protein 1 (pih1d1) from Danio rerio (Zebrafish).